A 158-amino-acid polypeptide reads, in one-letter code: Large ribosomal subunit protein uL11 (158 aa).

It belongs to the universal ribosomal protein uL11 family. Part of the ribosomal stalk of the 50S ribosomal subunit. Interacts with L10 and the large rRNA to form the base of the stalk. L10 forms an elongated spine to which L12 dimers bind in a sequential fashion forming a multimeric L10(L12)X complex.

Functionally, forms part of the ribosomal stalk which helps the ribosome interact with GTP-bound translation factors. The sequence is that of Large ribosomal subunit protein uL11 from Methanoculleus marisnigri (strain ATCC 35101 / DSM 1498 / JR1).